We begin with the raw amino-acid sequence, 414 residues long: Alanine--glyoxylate aminotransferase (414 aa).

The N-terminal 23 residues, M1–M23, are a transit peptide targeting the mitochondrion. An N6-(pyridoxal phosphate)lysine modification is found at K231. K247 carries the N6-acetyllysine; alternate modification. N6-succinyllysine; alternate is present on K247. Residue K256 is modified to N6-acetyllysine. K330 bears the N6-acetyllysine; alternate mark. K330 bears the N6-succinyllysine; alternate mark. K334 carries the post-translational modification N6-acetyllysine. A substrate-binding site is contributed by R382. The Microbody targeting signal motif lies at N412–L414.

It belongs to the class-V pyridoxal-phosphate-dependent aminotransferase family. Homodimer. Pyridoxal 5'-phosphate serves as cofactor.

Its subcellular location is the peroxisome. The protein localises to the mitochondrion matrix. The catalysed reaction is L-serine + pyruvate = 3-hydroxypyruvate + L-alanine. The enzyme catalyses glyoxylate + L-alanine = glycine + pyruvate. Functionally, catalyzes the transamination of glyoxylate to glycine and contributes to the glyoxylate detoxification. Its function is as follows. Catalyzes the transamination between L-serine and pyruvate and weakly contributes to gluconeogenesis from the L-serine metabolism. In Mus musculus (Mouse), this protein is Alanine--glyoxylate aminotransferase.